Here is a 165-residue protein sequence, read N- to C-terminus: Lymphocyte antigen 6K (165 aa).

Positions 1 to 17 are cleaved as a signal peptide; that stretch reads MALLALLLVVALPRVWT. A glycan (N-linked (GlcNAc...) asparagine) is linked at Asn-20. Residues 47–141 form the UPAR/Ly6 domain; the sequence is ERENTFECQN…VFKEYAGSMG (95 aa). Gly-138 carries the GPI-anchor amidated glycine lipid modification. The propeptide at 139-165 is removed in mature form; it reads SMGESCGGLWLAILLLLASIAAGLSLS.

In terms of assembly, interacts with TEX101. As to expression, specifically expressed in testis (at protein level).

Its subcellular location is the secreted. It is found in the cytoplasm. The protein localises to the cell membrane. It localises to the cytoplasmic vesicle. The protein resides in the secretory vesicle. Its subcellular location is the acrosome. It is found in the membrane raft. Its function is as follows. Required for sperm migration into the oviduct and male fertility by controlling binding of sperm to zona pellucida. May play a role in cell growth. In Homo sapiens (Human), this protein is Lymphocyte antigen 6K.